The following is a 184-amino-acid chain: MNNLENIVEQLKRNRVVAYPTEAVFGLGCNPNNESAVRALLKLKKRPEEKGLILIAPTKELLLPYIDENKLTAAHWQIFETPSERAITWVMPAKKAVPQYLTGQFDTIAVRLCCIPAVIDLCERTGFALTSTSCNLTGQEPCRTADEVKLQFGADFPVLEAETAGKTNPPEIRDIFTQHIFRQG.

A YrdC-like domain is found at 1-184 (MNNLENIVEQ…IFTQHIFRQG (184 aa)).

The protein belongs to the SUA5 family. TsaC subfamily.

It localises to the cytoplasm. It carries out the reaction L-threonine + hydrogencarbonate + ATP = L-threonylcarbamoyladenylate + diphosphate + H2O. Its function is as follows. Required for the formation of a threonylcarbamoyl group on adenosine at position 37 (t(6)A37) in tRNAs that read codons beginning with adenine. Catalyzes the conversion of L-threonine, HCO(3)(-)/CO(2) and ATP to give threonylcarbamoyl-AMP (TC-AMP) as the acyladenylate intermediate, with the release of diphosphate. The chain is Threonylcarbamoyl-AMP synthase from Actinobacillus pleuropneumoniae serotype 5b (strain L20).